The sequence spans 1137 residues: Receptor-type guanylate cyclase gcy-1 (1137 aa).

A signal peptide spans 1–18; that stretch reads MQIFTILLLFNIFPSIFV. Residues 19-494 lie on the Extracellular side of the membrane; sequence QNLPDTTVAP…CPVSFWEQYK (476 aa). N-linked (GlcNAc...) asparagine glycosylation is found at Asn-219, Asn-348, Asn-358, Asn-384, Asn-417, and Asn-451. The chain crosses the membrane as a helical span at residues 495-515; the sequence is ILIFVAIAVIVLMVLIMIIGC. Topologically, residues 516 to 1137 are cytoplasmic; sequence LCVISGKRAE…FKMDTLKVAN (622 aa). One can recognise a Protein kinase domain in the interval 557–826; it reads LQSAPSISTG…ENICSQMKGL (270 aa). Positions 840-871 form a coiled coil; the sequence is NMLEEYTSTLEEEIEERTKELTLEKKKADILL. The region spanning 898-1028 is the Guanylate cyclase domain; the sequence is TVFFSDVVKF…DTVNTASRME (131 aa). The disordered stretch occupies residues 1086 to 1122; the sequence is ELRSISNRSTPPVTNDRWIPNPSSSHGSRPSSVYDPL. Over residues 1088 to 1098 the composition is skewed to polar residues; that stretch reads RSISNRSTPPV. Residues 1105-1117 show a composition bias toward low complexity; sequence PNPSSSHGSRPSS.

The protein belongs to the adenylyl cyclase class-4/guanylyl cyclase family. As to expression, expressed predominantly in sensory neurons. Expressed asymmetrically in the right ASE (ASER) neuron and bilaterally in ASI and URX neurons. Expressed in PVT and bilaterally in AIY non-sensory neurons. Expressed in intestine.

Its subcellular location is the membrane. It catalyses the reaction GTP = 3',5'-cyclic GMP + diphosphate. Functionally, guanylate cyclase involved in the production of the second messenger cGMP. Involved in the sensing of K+ gradient by the ASE right (ASER) sensory neuron. This Caenorhabditis elegans protein is Receptor-type guanylate cyclase gcy-1 (gcy-1).